A 526-amino-acid chain; its full sequence is Collagen alpha-2(I) chain (526 aa).

The segment at 1 to 291 is disordered; the sequence is GFPGEKGPSG…PRSPPSLRPK (291 aa). Composition is skewed to low complexity over residues 9–36, 44–81, and 110–131; these read SGEAGTAGPPGTPGPQGLLGAPGILGLP, LPGVAGALGEPGPLGIAGPPGARGPPGAVGSPGVNGAP, and YPGNAGPVGAAGAPGPQGSVGP. A compositionally biased stretch (basic and acidic residues) spans 165–176; the sequence is RGDKGEPGDKGP. The segment covering 249–261 has biased composition (pro residues); it reads AGPPGPPGPPGPP. A propeptide spans 263–526 (C-terminal propeptide); that stretch reads ASGGGYDFGY…YVDVGPVCFK (264 aa). The region spanning 293-526 is the Fibrillar collagen NC1 domain; it reads YEVDATLKSL…YVDVGPVCFK (234 aa). 3 disulfide bridges follow: C323/C355, C363/C524, and C432/C477. Positions 341, 343, 344, 346, and 349 each coordinate Ca(2+).

Belongs to the fibrillar collagen family. As to quaternary structure, trimers of one alpha 2(I) and two alpha 1(I) chains. Interacts (via C-terminus) with TMEM131 (via PapD-L domain); the interaction is direct and is involved in assembly and TRAPPIII ER-to-Golgi transport complex-dependent secretion of collagen. Post-translationally, prolines at the third position of the tripeptide repeating unit (G-X-Y) are hydroxylated in some or all of the chains. In terms of tissue distribution, forms the fibrils of tendon, ligaments and bones. In bones the fibrils are mineralized with calcium hydroxyapatite.

It is found in the secreted. The protein resides in the extracellular space. Its subcellular location is the extracellular matrix. Functionally, type I collagen is a member of group I collagen (fibrillar forming collagen). This chain is Collagen alpha-2(I) chain (COL1A2), found in Oryctolagus cuniculus (Rabbit).